A 241-amino-acid chain; its full sequence is Carboxysome assembly protein CcmN (241 aa).

The segment at Gly123 to Ala206 is disordered. Positions Gln185–Ser195 are enriched in polar residues. Low complexity predominate over residues Thr196–Ala206. The Encapsulation peptide motif lies at Val219–Ser241.

Belongs to the CcmN family. As to quaternary structure, interacts with full-length and the N-terminal 249 residues of CcmM; a probable CcmM-CcaA-CcmN complex can also be isolated. Interacts with CcmK.

It localises to the carboxysome. Its function is as follows. Required for carboxysome formation; the N-terminus interacts with CcmM which itself binds RuBisCO (ribulose bisphosphate carboxylase, rbcL-rbcS). May also contact shell protein CcmK to help assemble the carboxysome. In terms of biological role, beta-carboxysome assembly initiates when soluble RuBisCO is condensed into a liquid matrix in a pre-carboxysome by the RbcS-like domains of probably both forms of CcmM. CcmN interacts with the N-terminus of full-length CcmM, and then recruits the CcmK major shell protein via CcmN's encapsulation peptide. Shell formation requires CcmK proteins and CcmO. CcmL caps the otherwise elongated carboxysome. Once fully encapsulated carboxysomes are formed, they migrate within the cell probably via interactions with the cytoskeleton. This is Carboxysome assembly protein CcmN from Synechocystis sp. (strain ATCC 27184 / PCC 6803 / Kazusa).